The sequence spans 714 residues: Polyribonucleotide nucleotidyltransferase (714 aa).

Mg(2+)-binding residues include D487 and D493. Positions 554 to 613 (PRIETLKIPTDKIREVIGTGGKVIREIVEKTGAKINIEDDGTVKVASSDGNSIKAAIAWI) constitute a KH domain. The S1 motif domain occupies 623-691 (GQIYEGTVVK…DRGKVRLSMR (69 aa)).

Belongs to the polyribonucleotide nucleotidyltransferase family. Mg(2+) serves as cofactor.

The protein localises to the cytoplasm. It catalyses the reaction RNA(n+1) + phosphate = RNA(n) + a ribonucleoside 5'-diphosphate. Its function is as follows. Involved in mRNA degradation. Catalyzes the phosphorolysis of single-stranded polyribonucleotides processively in the 3'- to 5'-direction. This Methylocella silvestris (strain DSM 15510 / CIP 108128 / LMG 27833 / NCIMB 13906 / BL2) protein is Polyribonucleotide nucleotidyltransferase.